Here is a 323-residue protein sequence, read N- to C-terminus: Dolichyl-phosphate beta-glucosyltransferase ALG5A (323 aa).

At Met-1–Arg-5 the chain is on the lumenal side. The chain crosses the membrane as a helical span at residues Phe-6 to Ile-26. At Ala-27–His-323 the chain is on the cytoplasmic side.

The protein belongs to the glycosyltransferase 2 family.

Its subcellular location is the endoplasmic reticulum membrane. The enzyme catalyses a di-trans,poly-cis-dolichyl phosphate + UDP-alpha-D-glucose = a di-trans,poly-cis-dolichyl beta-D-glucosyl phosphate + UDP. It functions in the pathway protein modification; protein glycosylation. Its function is as follows. Dolichyl-phosphate beta-glucosyltransferase involved in the glycosylation of glycoproteins through the synthesis of dolichyl beta-D-glucosyl phosphate which serves as a sugar donor for transfer of three glucose residues to the Man-9-GlcNAc-2-PP-dolichol precursor to N-glycans. This chain is Dolichyl-phosphate beta-glucosyltransferase ALG5A, found in Trichomonas vaginalis (strain ATCC PRA-98 / G3).